The chain runs to 177 residues: Deoxyuridine 5'-triphosphate nucleotidohydrolase (177 aa).

Substrate-binding positions include 83–85, Asn-96, 100–102, and Lys-110; these read RSG and TID. Positions 150–163 are enriched in polar residues; that stretch reads DLTSSQTDLSNQPN. The disordered stretch occupies residues 150–177; that stretch reads DLTSSQTDLSNQPNTGRGTGGFGSTGQK. The span at 166–177 shows a compositional bias: gly residues; the sequence is RGTGGFGSTGQK.

This sequence belongs to the dUTPase family. The cofactor is Mg(2+).

The enzyme catalyses dUTP + H2O = dUMP + diphosphate + H(+). The protein operates within pyrimidine metabolism; dUMP biosynthesis; dUMP from dCTP (dUTP route): step 2/2. Its function is as follows. This enzyme is involved in nucleotide metabolism: it produces dUMP, the immediate precursor of thymidine nucleotides and it decreases the intracellular concentration of dUTP so that uracil cannot be incorporated into DNA. This Bartonella bacilliformis (strain ATCC 35685 / KC583 / Herrer 020/F12,63) protein is Deoxyuridine 5'-triphosphate nucleotidohydrolase.